Consider the following 466-residue polypeptide: Ribulose bisphosphate carboxylase large chain (466 aa).

Lys-4 bears the N6,N6,N6-trimethyllysine mark. Substrate contacts are provided by Asn-113 and Thr-163. Lys-165 acts as the Proton acceptor in catalysis. Lys-167 contacts substrate. Residues Lys-191, Asp-193, and Glu-194 each contribute to the Mg(2+) site. The residue at position 191 (Lys-191) is an N6-carboxylysine. The active-site Proton acceptor is the His-284. Substrate is bound by residues Arg-285, His-317, and Ser-369.

The protein belongs to the RuBisCO large chain family. Type I subfamily. In terms of assembly, heterohexadecamer of 8 large chains and 8 small chains; disulfide-linked. The disulfide link is formed within the large subunit homodimers. Requires Mg(2+) as cofactor. The disulfide bond which can form in the large chain dimeric partners within the hexadecamer appears to be associated with oxidative stress and protein turnover.

The protein resides in the plastid. Its subcellular location is the chloroplast. The enzyme catalyses 2 (2R)-3-phosphoglycerate + 2 H(+) = D-ribulose 1,5-bisphosphate + CO2 + H2O. It carries out the reaction D-ribulose 1,5-bisphosphate + O2 = 2-phosphoglycolate + (2R)-3-phosphoglycerate + 2 H(+). RuBisCO catalyzes two reactions: the carboxylation of D-ribulose 1,5-bisphosphate, the primary event in carbon dioxide fixation, as well as the oxidative fragmentation of the pentose substrate in the photorespiration process. Both reactions occur simultaneously and in competition at the same active site. The chain is Ribulose bisphosphate carboxylase large chain from Nelsonia canescens (Blue pussyleaf).